Consider the following 501-residue polypeptide: Probable cytosol aminopeptidase (501 aa).

Positions 268 and 273 each coordinate Mn(2+). Lys-280 is an active-site residue. Mn(2+)-binding residues include Asp-291, Asp-350, and Glu-352. Arg-354 is a catalytic residue.

Belongs to the peptidase M17 family. Mn(2+) serves as cofactor.

Its subcellular location is the cytoplasm. The enzyme catalyses Release of an N-terminal amino acid, Xaa-|-Yaa-, in which Xaa is preferably Leu, but may be other amino acids including Pro although not Arg or Lys, and Yaa may be Pro. Amino acid amides and methyl esters are also readily hydrolyzed, but rates on arylamides are exceedingly low.. It catalyses the reaction Release of an N-terminal amino acid, preferentially leucine, but not glutamic or aspartic acids.. Its function is as follows. Presumably involved in the processing and regular turnover of intracellular proteins. Catalyzes the removal of unsubstituted N-terminal amino acids from various peptides. This chain is Probable cytosol aminopeptidase, found in Nitrosococcus oceani (strain ATCC 19707 / BCRC 17464 / JCM 30415 / NCIMB 11848 / C-107).